A 120-amino-acid polypeptide reads, in one-letter code: Large ribosomal subunit protein bL17 (120 aa).

Belongs to the bacterial ribosomal protein bL17 family. Part of the 50S ribosomal subunit. Contacts protein L32.

The sequence is that of Large ribosomal subunit protein bL17 from Mycoplasmopsis pulmonis (strain UAB CTIP) (Mycoplasma pulmonis).